A 259-amino-acid polypeptide reads, in one-letter code: Protein-L-isoaspartate O-methyltransferase (259 aa).

The tract at residues 1-25 (MRKRVDPPAGGRLAPGITPANSNTR) is disordered. Ser-107 is a catalytic residue.

It belongs to the methyltransferase superfamily. L-isoaspartyl/D-aspartyl protein methyltransferase family.

The protein localises to the cytoplasm. It catalyses the reaction [protein]-L-isoaspartate + S-adenosyl-L-methionine = [protein]-L-isoaspartate alpha-methyl ester + S-adenosyl-L-homocysteine. In terms of biological role, catalyzes the methyl esterification of L-isoaspartyl residues in peptides and proteins that result from spontaneous decomposition of normal L-aspartyl and L-asparaginyl residues. It plays a role in the repair and/or degradation of damaged proteins. The chain is Protein-L-isoaspartate O-methyltransferase from Bordetella bronchiseptica (strain ATCC BAA-588 / NCTC 13252 / RB50) (Alcaligenes bronchisepticus).